Consider the following 96-residue polypeptide: DNA-directed RNA polymerase subunit Rpo11 (96 aa).

The protein belongs to the archaeal Rpo11/eukaryotic RPB11/RPC19 RNA polymerase subunit family. In terms of assembly, part of the RNA polymerase complex.

The protein resides in the cytoplasm. It carries out the reaction RNA(n) + a ribonucleoside 5'-triphosphate = RNA(n+1) + diphosphate. In terms of biological role, DNA-dependent RNA polymerase (RNAP) catalyzes the transcription of DNA into RNA using the four ribonucleoside triphosphates as substrates. This Nanoarchaeum equitans (strain Kin4-M) protein is DNA-directed RNA polymerase subunit Rpo11.